A 2890-amino-acid chain; its full sequence is Bifunctional DNA-directed RNA polymerase subunit beta-beta' (2890 aa).

Residues 1–1377 are DNA-directed RNA polymerase subunit beta; it reads MSKKIPLKNR…DINIFGDDVD (1377 aa). A DNA-directed RNA polymerase subunit beta' region spans residues 1384–2890; sequence PIVIKEDDRP…LRTLEDDPKF (1507 aa). Zn(2+) is bound by residues Cys1449, Cys1451, Cys1465, and Cys1468. Asp1849, Asp1851, and Asp1853 together coordinate Mg(2+). 4 residues coordinate Zn(2+): Cys2179, Cys2253, Cys2260, and Cys2263.

This sequence in the N-terminal section; belongs to the RNA polymerase beta chain family. The protein in the C-terminal section; belongs to the RNA polymerase beta' chain family. The RNAP catalytic core consists of 2 alpha, 1 beta/beta' and 1 omega subunit. When a sigma factor is associated with the core the holoenzyme is formed, which can initiate transcription. Mg(2+) serves as cofactor. It depends on Zn(2+) as a cofactor.

It carries out the reaction RNA(n) + a ribonucleoside 5'-triphosphate = RNA(n+1) + diphosphate. In terms of biological role, DNA-dependent RNA polymerase catalyzes the transcription of DNA into RNA using the four ribonucleoside triphosphates as substrates. The polypeptide is Bifunctional DNA-directed RNA polymerase subunit beta-beta' (rpoBC) (Helicobacter pylori (strain Shi470)).